The chain runs to 292 residues: Putative two-component response regulator-like APRR4 (292 aa).

Residues 43-158 (RVLVFDEDPS…DLRIVFKHLV (116 aa)) form the Response regulatory domain. Positions 168 to 215 (VTGEAEKAAGEKSSSVGDSTIRNPNKSKRSSCLEAEVNEEDRHDHNDR) are disordered. A compositionally biased stretch (polar residues) spans 179–191 (KSSSVGDSTIRNP). A DNA-binding region (myb-like GARP) is located at residues 225 to 275 (RVVWDEELHQNFLNAVDFLGLERAVPKKILDVMKVDYISRENVASHLQVTF).

Belongs to the ARR-like family. Binds the target DNA as a monomer.

The protein resides in the nucleus. Its function is as follows. Transcriptional activator that binds specifically to the DNA sequence 5'-[AG]GATT-3'. This chain is Putative two-component response regulator-like APRR4 (APRR4), found in Arabidopsis thaliana (Mouse-ear cress).